Here is a 711-residue protein sequence, read N- to C-terminus: Toxin RTX-III translocation ATP-binding protein (711 aa).

In terms of domain architecture, Peptidase C39 spans Met-1–Ile-129. His-87 is an active-site residue. Residues Phe-158–Gln-440 enclose the ABC transmembrane type-1 domain. 5 helical membrane-spanning segments follow: residues Ile-162 to Val-182, Leu-195 to Leu-215, Ala-273 to Tyr-293, Ile-299 to Leu-319, and Val-392 to Gly-412. The 236-residue stretch at Ile-472–Gln-707 folds into the ABC transporter domain. An ATP-binding site is contributed by Gly-506–Ser-513.

Belongs to the ABC transporter superfamily. Protein-1 exporter (TC 3.A.1.109) family. Homodimer.

The protein resides in the cell membrane. Involved in the transport of the toxin RTX-III. In Actinobacillus pleuropneumoniae (Haemophilus pleuropneumoniae), this protein is Toxin RTX-III translocation ATP-binding protein (apxIIIB).